Consider the following 295-residue polypeptide: Energy-coupling factor transporter ATP-binding protein EcfA2 (295 aa).

The ABC transporter domain maps to 3-246 (ITFKQVDFTY…PAWLTAHQLG (244 aa)). 40-47 (GHTGSGKS) contacts ATP.

It belongs to the ABC transporter superfamily. Energy-coupling factor EcfA family. Forms a stable energy-coupling factor (ECF) transporter complex composed of 2 membrane-embedded substrate-binding proteins (S component), 2 ATP-binding proteins (A component) and 2 transmembrane proteins (T component).

The protein resides in the cell membrane. Its function is as follows. ATP-binding (A) component of a common energy-coupling factor (ECF) ABC-transporter complex. Unlike classic ABC transporters this ECF transporter provides the energy necessary to transport a number of different substrates. The protein is Energy-coupling factor transporter ATP-binding protein EcfA2 of Lactiplantibacillus plantarum (strain ATCC BAA-793 / NCIMB 8826 / WCFS1) (Lactobacillus plantarum).